Reading from the N-terminus, the 366-residue chain is tRNA/tmRNA (uracil-C(5))-methyltransferase (366 aa).

Gln-190, Tyr-218, Asn-223, Glu-239, and Asp-299 together coordinate S-adenosyl-L-methionine. Residue Cys-324 is the Nucleophile of the active site. Residue Glu-358 is the Proton acceptor of the active site.

The protein belongs to the class I-like SAM-binding methyltransferase superfamily. RNA M5U methyltransferase family. TrmA subfamily.

It catalyses the reaction uridine(54) in tRNA + S-adenosyl-L-methionine = 5-methyluridine(54) in tRNA + S-adenosyl-L-homocysteine + H(+). The enzyme catalyses uridine(341) in tmRNA + S-adenosyl-L-methionine = 5-methyluridine(341) in tmRNA + S-adenosyl-L-homocysteine + H(+). Functionally, dual-specificity methyltransferase that catalyzes the formation of 5-methyluridine at position 54 (m5U54) in all tRNAs, and that of position 341 (m5U341) in tmRNA (transfer-mRNA). This is tRNA/tmRNA (uracil-C(5))-methyltransferase from Shigella dysenteriae serotype 1 (strain Sd197).